The primary structure comprises 381 residues: Protein-glutamate methylesterase/protein-glutamine glutaminase 1 (381 aa).

The Response regulatory domain maps to Arg-14–Ser-132. Asp-65 is modified (4-aspartylphosphate). The tract at residues Gln-143 to Val-173 is disordered. The span at Ala-144–Arg-153 shows a compositional bias: low complexity. Positions Pro-188 to Arg-381 constitute a CheB-type methylesterase domain. Residues Ser-199, His-227, and Asp-323 contribute to the active site.

This sequence belongs to the CheB family. In terms of processing, phosphorylated by CheA. Phosphorylation of the N-terminal regulatory domain activates the methylesterase activity.

It localises to the cytoplasm. The catalysed reaction is [protein]-L-glutamate 5-O-methyl ester + H2O = L-glutamyl-[protein] + methanol + H(+). It carries out the reaction L-glutaminyl-[protein] + H2O = L-glutamyl-[protein] + NH4(+). In terms of biological role, involved in chemotaxis. Part of a chemotaxis signal transduction system that modulates chemotaxis in response to various stimuli. Catalyzes the demethylation of specific methylglutamate residues introduced into the chemoreceptors (methyl-accepting chemotaxis proteins or MCP) by CheR. Also mediates the irreversible deamidation of specific glutamine residues to glutamic acid. This is Protein-glutamate methylesterase/protein-glutamine glutaminase 1 from Paramagnetospirillum magneticum (strain ATCC 700264 / AMB-1) (Magnetospirillum magneticum).